We begin with the raw amino-acid sequence, 280 residues long: Transcription factor HES-1 (280 aa).

The tract at residues 1-44 (MPADIMEKNSSSPVAATPASVNTTPDKPKTASEHRKSSKPIMEK) is disordered. The span at 10–21 (SSSPVAATPASV) shows a compositional bias: low complexity. Positions 26 to 35 (DKPKTASEHR) are enriched in basic and acidic residues. Residues 34–91 (HRKSSKPIMEKRRRARINESLSQLKTLILDALKKDSSRHSKLEKADILEMTVKHLRNL) form the bHLH domain. In terms of domain architecture, Orange spans 110–143 (YRAGFSECMNEVTRFLSTCEGVNTEVRTRLLGHL). Disordered stretches follow at residues 157-200 (GQPH…PPGG) and 254-280 (TSVG…PWRN). 2 stretches are compositionally biased toward pro residues: residues 164–174 (QAPPPPPPGPG) and 181–200 (FAPP…PPGG). A compositionally biased stretch (polar residues) spans 254-271 (TSVGPNAVSPSSGPSLTA). The short motif at 275 to 278 (WRPW) is the WRPW motif element.

As to quaternary structure, transcription repression requires formation of a complex with a corepressor protein of the Groucho/TLE family. Interacts (via WPRW motif) with TLE1, and more weakly with TLE2. Interacts with HES6. Interacts with SIRT1. Interacts with an FA complex, composed of FANCA, FANCF, FANCG and FANCL, but not of FANCC, nor FANCE. Post-translationally, (Microbial infection) Ubiquitinated via human cytomegalovirus/HCMV protein IE1 that assembles a HES1 ubiquitination complex; leading to HES1 proteasomal degradation.

The protein localises to the nucleus. Transcriptional repressor of genes that require a bHLH protein for their transcription. May act as a negative regulator of myogenesis by inhibiting the functions of MYOD1 and ASH1. Binds DNA on N-box motifs: 5'-CACNAG-3' with high affinity and on E-box motifs: 5'-CANNTG-3' with low affinity. May play a role in a functional FA core complex response to DNA cross-link damage, being required for the stability and nuclear localization of FA core complex proteins, as well as for FANCD2 monoubiquitination in response to DNA damage. The sequence is that of Transcription factor HES-1 (HES1) from Homo sapiens (Human).